Here is a 741-residue protein sequence, read N- to C-terminus: Melanoma-associated antigen D4 (741 aa).

Over residues 1 to 13 the composition is skewed to polar residues; it reads MAEGSFSVQSESY. Disordered stretches follow at residues 1-27, 136-206, 247-296, and 323-379; these read MAEGSFSVQSESYSVEDMDEGSDEVGE, RVAT…EGPS, MAFP…KALA, and PEGA…QPSL. Residues 14 to 27 are compositionally biased toward acidic residues; it reads SVEDMDEGSDEVGE. 2 stretches are compositionally biased toward polar residues: residues 140–151 and 187–196; these read PQVSGEDTQPTT and TSAQSQTGSP. Acidic residues predominate over residues 354-363; sequence DEYESSEEER. The MAGE domain maps to 413–611; the sequence is LQERANKLVK…REWKAHFLEA (199 aa). A disordered region spans residues 700 to 720; the sequence is VSSGTNGGASTSVLDGPSTSS. Residues 701–720 show a composition bias toward polar residues; sequence SSGTNGGASTSVLDGPSTSS.

As to quaternary structure, interacts with TRIM27. In terms of tissue distribution, expressed only in brain and ovary among normal tissues. Isoform 1 and isoform 2 are specifically expressed in glioma cells among cancer cells. Detected in some renal cell carcinoma samples.

In terms of biological role, may enhance ubiquitin ligase activity of RING-type zinc finger-containing E3 ubiquitin-protein ligases. Proposed to act through recruitment and/or stabilization of the Ubl-conjugating enzyme (E2) at the E3:substrate complex. This Homo sapiens (Human) protein is Melanoma-associated antigen D4 (MAGED4).